Reading from the N-terminus, the 262-residue chain is Ribosomal RNA small subunit methyltransferase A (262 aa).

6 residues coordinate S-adenosyl-L-methionine: asparagine 14, leucine 16, glycine 41, glutamate 63, aspartate 85, and asparagine 105.

The protein belongs to the class I-like SAM-binding methyltransferase superfamily. rRNA adenine N(6)-methyltransferase family. RsmA subfamily.

It is found in the cytoplasm. It catalyses the reaction adenosine(1518)/adenosine(1519) in 16S rRNA + 4 S-adenosyl-L-methionine = N(6)-dimethyladenosine(1518)/N(6)-dimethyladenosine(1519) in 16S rRNA + 4 S-adenosyl-L-homocysteine + 4 H(+). Specifically dimethylates two adjacent adenosines (A1518 and A1519) in the loop of a conserved hairpin near the 3'-end of 16S rRNA in the 30S particle. May play a critical role in biogenesis of 30S subunits. The protein is Ribosomal RNA small subunit methyltransferase A of Maridesulfovibrio salexigens (strain ATCC 14822 / DSM 2638 / NCIMB 8403 / VKM B-1763) (Desulfovibrio salexigens).